A 349-amino-acid polypeptide reads, in one-letter code: 4-hydroxy-3-methylbut-2-enyl diphosphate reductase (349 aa).

Residue Cys18 participates in [4Fe-4S] cluster binding. His47 and His83 together coordinate (2E)-4-hydroxy-3-methylbut-2-enyl diphosphate. Residues His47 and His83 each contribute to the dimethylallyl diphosphate site. Isopentenyl diphosphate contacts are provided by His47 and His83. Cys105 is a [4Fe-4S] cluster binding site. His133 is a (2E)-4-hydroxy-3-methylbut-2-enyl diphosphate binding site. His133 contributes to the dimethylallyl diphosphate binding site. Residue His133 participates in isopentenyl diphosphate binding. Glu135 (proton donor) is an active-site residue. Thr174 lines the (2E)-4-hydroxy-3-methylbut-2-enyl diphosphate pocket. Residue Cys204 participates in [4Fe-4S] cluster binding. Residues Ser232, Ser233, Asn234, and Ser277 each contribute to the (2E)-4-hydroxy-3-methylbut-2-enyl diphosphate site. Ser232, Ser233, Asn234, and Ser277 together coordinate dimethylallyl diphosphate. Isopentenyl diphosphate contacts are provided by Ser232, Ser233, Asn234, and Ser277.

The protein belongs to the IspH family. [4Fe-4S] cluster serves as cofactor.

It carries out the reaction isopentenyl diphosphate + 2 oxidized [2Fe-2S]-[ferredoxin] + H2O = (2E)-4-hydroxy-3-methylbut-2-enyl diphosphate + 2 reduced [2Fe-2S]-[ferredoxin] + 2 H(+). The enzyme catalyses dimethylallyl diphosphate + 2 oxidized [2Fe-2S]-[ferredoxin] + H2O = (2E)-4-hydroxy-3-methylbut-2-enyl diphosphate + 2 reduced [2Fe-2S]-[ferredoxin] + 2 H(+). Its pathway is isoprenoid biosynthesis; dimethylallyl diphosphate biosynthesis; dimethylallyl diphosphate from (2E)-4-hydroxy-3-methylbutenyl diphosphate: step 1/1. It participates in isoprenoid biosynthesis; isopentenyl diphosphate biosynthesis via DXP pathway; isopentenyl diphosphate from 1-deoxy-D-xylulose 5-phosphate: step 6/6. Its function is as follows. Catalyzes the conversion of 1-hydroxy-2-methyl-2-(E)-butenyl 4-diphosphate (HMBPP) into a mixture of isopentenyl diphosphate (IPP) and dimethylallyl diphosphate (DMAPP). Acts in the terminal step of the DOXP/MEP pathway for isoprenoid precursor biosynthesis. The chain is 4-hydroxy-3-methylbut-2-enyl diphosphate reductase from Bartonella bacilliformis (strain ATCC 35685 / KC583 / Herrer 020/F12,63).